The chain runs to 294 residues: NAD kinase (294 aa).

Aspartate 74 acts as the Proton acceptor in catalysis. NAD(+)-binding positions include 74–75 (DG), arginine 79, 149–150 (NE), aspartate 179, 190–195 (TGYSLS), and alanine 214.

Belongs to the NAD kinase family. A divalent metal cation is required as a cofactor.

Its subcellular location is the cytoplasm. The enzyme catalyses NAD(+) + ATP = ADP + NADP(+) + H(+). Involved in the regulation of the intracellular balance of NAD and NADP, and is a key enzyme in the biosynthesis of NADP. Catalyzes specifically the phosphorylation on 2'-hydroxyl of the adenosine moiety of NAD to yield NADP. The protein is NAD kinase of Flavobacterium johnsoniae (strain ATCC 17061 / DSM 2064 / JCM 8514 / BCRC 14874 / CCUG 350202 / NBRC 14942 / NCIMB 11054 / UW101) (Cytophaga johnsonae).